A 454-amino-acid chain; its full sequence is UDP-N-acetylmuramoylalanine--D-glutamate ligase (454 aa).

115–121 (GTNGKTT) provides a ligand contact to ATP.

The protein belongs to the MurCDEF family.

Its subcellular location is the cytoplasm. The enzyme catalyses UDP-N-acetyl-alpha-D-muramoyl-L-alanine + D-glutamate + ATP = UDP-N-acetyl-alpha-D-muramoyl-L-alanyl-D-glutamate + ADP + phosphate + H(+). Its pathway is cell wall biogenesis; peptidoglycan biosynthesis. Functionally, cell wall formation. Catalyzes the addition of glutamate to the nucleotide precursor UDP-N-acetylmuramoyl-L-alanine (UMA). This chain is UDP-N-acetylmuramoylalanine--D-glutamate ligase, found in Thermoanaerobacter pseudethanolicus (strain ATCC 33223 / 39E) (Clostridium thermohydrosulfuricum).